The following is a 344-amino-acid chain: tRNA(Ile)-lysidine synthase (344 aa).

43 to 48 is an ATP binding site; the sequence is SGGADS.

It belongs to the tRNA(Ile)-lysidine synthase family.

The protein localises to the cytoplasm. The catalysed reaction is cytidine(34) in tRNA(Ile2) + L-lysine + ATP = lysidine(34) in tRNA(Ile2) + AMP + diphosphate + H(+). Functionally, ligates lysine onto the cytidine present at position 34 of the AUA codon-specific tRNA(Ile) that contains the anticodon CAU, in an ATP-dependent manner. Cytidine is converted to lysidine, thus changing the amino acid specificity of the tRNA from methionine to isoleucine. The sequence is that of tRNA(Ile)-lysidine synthase from Bordetella bronchiseptica (strain ATCC BAA-588 / NCTC 13252 / RB50) (Alcaligenes bronchisepticus).